A 308-amino-acid chain; its full sequence is Pantothenate kinase (308 aa).

ATP is bound at residue 93-100; the sequence is GSVAVGKS.

Belongs to the prokaryotic pantothenate kinase family.

Its subcellular location is the cytoplasm. The enzyme catalyses (R)-pantothenate + ATP = (R)-4'-phosphopantothenate + ADP + H(+). It participates in cofactor biosynthesis; coenzyme A biosynthesis; CoA from (R)-pantothenate: step 1/5. The chain is Pantothenate kinase from Corynebacterium aurimucosum (strain ATCC 700975 / DSM 44827 / CIP 107346 / CN-1) (Corynebacterium nigricans).